The sequence spans 422 residues: DNA-binding transcriptional activator AdeR (422 aa).

It belongs to the CdaR family.

Activates ald expression in response to alanine availability and is important for normal sporulation in B.subtilis. The polypeptide is DNA-binding transcriptional activator AdeR (Bacillus subtilis (strain 168)).